The primary structure comprises 364 residues: Putative agmatine deiminase (364 aa).

Cys-355 serves as the catalytic Amidino-cysteine intermediate.

The protein belongs to the agmatine deiminase family.

The catalysed reaction is agmatine + H2O = N-carbamoylputrescine + NH4(+). In Mycoplasma mycoides subsp. mycoides SC (strain CCUG 32753 / NCTC 10114 / PG1), this protein is Putative agmatine deiminase.